Here is a 366-residue protein sequence, read N- to C-terminus: Galactoside alpha-(1,2)-fucosyltransferase 1 (366 aa).

Residues 1 to 8 lie on the Cytoplasmic side of the membrane; it reads MWPPSHRQ. A helical; Signal-anchor for type II membrane protein membrane pass occupies residues 9-25; it reads LCRAFLLVCVFSVISFF. At 26 to 366 the chain is on the lumenal side; the sequence is LHIHQDSFPH…LSPLWTLAKP (341 aa). N-linked (GlcNAc...) asparagine glycosylation is found at Asn-66, Asn-302, and Asn-328.

Belongs to the glycosyltransferase 11 family.

The protein localises to the golgi apparatus. It is found in the golgi stack membrane. It catalyses the reaction a beta-D-galactosyl-(1-&gt;4)-N-acetyl-beta-D-glucosaminyl derivative + GDP-beta-L-fucose = an alpha-L-Fuc-(1-&gt;2)-beta-D-Gal-(1-&gt;4)-beta-D-GlcNAc derivative + GDP + H(+). The enzyme catalyses a ganglioside GA1 + GDP-beta-L-fucose = a ganglioside Fuc-GA1 + GDP + H(+). The catalysed reaction is a beta-D-Gal-(1-&gt;3)-beta-D-GlcNAc-(1-&gt;3)-beta-D-Gal-(1-&gt;4)-beta-D-Glc-(1&lt;-&gt;1')-Cer(d18:1(4E)) + GDP-beta-L-fucose = alpha-L-fucosyl-(1-&gt;2)- beta-D-galactosyl-(1-&gt;3)-N-acetyl-beta-D-glucosaminyl-(1-&gt;3)-beta-D-galactosyl-(1-&gt;4)-beta-D-glucosyl-(1&lt;-&gt;1')-N-acylsphing-4-enine + GDP + H(+). It carries out the reaction a neolactoside nLc4Cer(d18:1(4E)) + GDP-beta-L-fucose = a neolactoside IV(2)-alpha-Fuc-nLc4Cer(d18:1(4E)) + GDP + H(+). It catalyses the reaction a ganglioside GM1 + GDP-beta-L-fucose = a ganglioside Fuc-GM1 + GDP + H(+). The enzyme catalyses beta-D-galactosyl-(1-&gt;3)-N-acetyl-D-galactosamine + GDP-beta-L-fucose = alpha-L-fucosyl-(1-&gt;2)-beta-D-galactosyl-(1-&gt;3)-N-acetyl-D-galactosamine + GDP + H(+). Its pathway is protein modification; protein glycosylation. Its function is as follows. Catalyzes the transfer of L-fucose, from a guanosine diphosphate-beta-L-fucose, to the terminal galactose residue of glycoconjugates through an alpha(1,2) linkage leading to H antigen synthesis that is an intermediate substrate in the synthesis of ABO blood group antigens. H antigen is essential for maturation of the glomerular layer of the main olfactory bulb, in cell migration and early cell-cell contacts during tumor associated angiogenesis. Preferentially fucosylates soluble lactose and to a lesser extent fucosylates glycolipids gangliosides GA1 and GM1a. In Gorilla gorilla gorilla (Western lowland gorilla), this protein is Galactoside alpha-(1,2)-fucosyltransferase 1.